The sequence spans 222 residues: Small ribosomal subunit protein uS3 (222 aa).

A KH type-2 domain is found at 39-108 (IRRHIKEKLY…TISLDIKEIK (70 aa)).

It belongs to the universal ribosomal protein uS3 family. As to quaternary structure, part of the 30S ribosomal subunit. Forms a tight complex with proteins S10 and S14.

In terms of biological role, binds the lower part of the 30S subunit head. Binds mRNA in the 70S ribosome, positioning it for translation. The chain is Small ribosomal subunit protein uS3 from Caldicellulosiruptor bescii (strain ATCC BAA-1888 / DSM 6725 / KCTC 15123 / Z-1320) (Anaerocellum thermophilum).